The primary structure comprises 310 residues: CRAL-TRIO domain-containing protein YKL091C (310 aa).

The CRAL-TRIO domain occupies 101–274 (ERIKLAKMYP…KYGGTSVLHN (174 aa)).

In Saccharomyces cerevisiae (strain ATCC 204508 / S288c) (Baker's yeast), this protein is CRAL-TRIO domain-containing protein YKL091C.